The sequence spans 433 residues: Tubulin epsilon and delta complex protein 2 (433 aa).

Disordered stretches follow at residues 45-69 (TGTRALKPPPGPETNGEDPLPACTP), 95-169 (TKAG…VGMG), and 326-345 (QPPRPCPVGRPPGASPSCGG). Polar residues predominate over residues 107 to 120 (KSRSIVTSSGTTAS). The residue at position 159 (S159) is a Phosphoserine. Pro residues predominate over residues 327 to 339 (PPRPCPVGRPPGA).

As to quaternary structure, interacts with TEDC1. Found in a complex with TEDC1, TEDC2, TUBE1 and TUBD1.

It localises to the cell projection. Its subcellular location is the cilium. The protein localises to the cytoplasm. The protein resides in the cytoskeleton. It is found in the microtubule organizing center. It localises to the centrosome. Its subcellular location is the centriole. Functionally, acts as a positive regulator of ciliary hedgehog signaling. Required for centriole stability. This chain is Tubulin epsilon and delta complex protein 2, found in Homo sapiens (Human).